The chain runs to 392 residues: Putative 8-amino-7-oxononanoate synthase (392 aa).

Arg22 lines the substrate pocket. 109–110 (GW) lines the pyridoxal 5'-phosphate pocket. His139 contacts substrate. Residues Ser187, 212-215 (DEAH), and 239-242 (TFSK) contribute to the pyridoxal 5'-phosphate site. Lys242 carries the N6-(pyridoxal phosphate)lysine modification. Thr356 serves as a coordination point for substrate.

The protein belongs to the class-II pyridoxal-phosphate-dependent aminotransferase family. BioF subfamily. As to quaternary structure, homodimer. Pyridoxal 5'-phosphate serves as cofactor.

It carries out the reaction 6-carboxyhexanoyl-[ACP] + L-alanine + H(+) = (8S)-8-amino-7-oxononanoate + holo-[ACP] + CO2. It participates in cofactor biosynthesis; biotin biosynthesis. Catalyzes the decarboxylative condensation of pimeloyl-[acyl-carrier protein] and L-alanine to produce 8-amino-7-oxononanoate (AON), [acyl-carrier protein], and carbon dioxide. The chain is Putative 8-amino-7-oxononanoate synthase (bioF) from Paramagnetospirillum magneticum (strain ATCC 700264 / AMB-1) (Magnetospirillum magneticum).